The primary structure comprises 77 residues: Acyl carrier protein (77 aa).

A Carrier domain is found at 2-77 (SDIADRVKKI…DAVKFISEAA (76 aa)). S37 is modified (O-(pantetheine 4'-phosphoryl)serine).

It belongs to the acyl carrier protein (ACP) family. In terms of processing, 4'-phosphopantetheine is transferred from CoA to a specific serine of apo-ACP by AcpS. This modification is essential for activity because fatty acids are bound in thioester linkage to the sulfhydryl of the prosthetic group.

The protein localises to the cytoplasm. Its pathway is lipid metabolism; fatty acid biosynthesis. Its function is as follows. Carrier of the growing fatty acid chain in fatty acid biosynthesis. This Cereibacter sphaeroides (strain ATCC 17029 / ATH 2.4.9) (Rhodobacter sphaeroides) protein is Acyl carrier protein.